Here is a 284-residue protein sequence, read N- to C-terminus: MKLCDFEVGLDQPFFLIAGTCVVESEQMTIDTAGRLKEICAKLNVPFIYKSSYDKANRSSGKSFRGLGMDEGLRILGEVKRQLGLPVLTDVHSIDEIEQVASVVDVLQTPAFLCRQTDFIHACARSGKPVNIKKGQFLAPHDMKNVIDKARDAAREAGLSEDRFMACERGVSFGYNNLVSDMRSLAIMRETNAPVVFDATHSVQLPGGQGTSSGGQREFVPVLARAAVATGVAGLFMETHPNPAEAKSDGPNAVPLHRMGALLETLVTLDQAVKRNPLLENDFN.

It belongs to the KdsA family.

The protein localises to the cytoplasm. It carries out the reaction D-arabinose 5-phosphate + phosphoenolpyruvate + H2O = 3-deoxy-alpha-D-manno-2-octulosonate-8-phosphate + phosphate. The protein operates within carbohydrate biosynthesis; 3-deoxy-D-manno-octulosonate biosynthesis; 3-deoxy-D-manno-octulosonate from D-ribulose 5-phosphate: step 2/3. It functions in the pathway bacterial outer membrane biogenesis; lipopolysaccharide biosynthesis. The protein is 2-dehydro-3-deoxyphosphooctonate aldolase of Burkholderia vietnamiensis (strain G4 / LMG 22486) (Burkholderia cepacia (strain R1808)).